We begin with the raw amino-acid sequence, 312 residues long: Olfactory receptor 2B8 (312 aa).

Over Met-1–Leu-25 the chain is Extracellular. N-linked (GlcNAc...) asparagine glycosylation occurs at Asn-5. The chain crosses the membrane as a helical span at residues Val-26–Ser-49. Residues His-50–Thr-57 lie on the Cytoplasmic side of the membrane. The chain crosses the membrane as a helical span at residues Pro-58 to Pro-79. The Extracellular portion of the chain corresponds to Gln-80 to Gln-100. Cys-97 and Cys-189 are oxidised to a cystine. Residues Leu-101–Phe-120 form a helical membrane-spanning segment. At Asp-121–Cys-139 the chain is on the cytoplasmic side. Residues Leu-140 to Leu-158 form a helical membrane-spanning segment. The Extracellular portion of the chain corresponds to Gln-159–Asn-195. Residue Asn-195 is glycosylated (N-linked (GlcNAc...) asparagine). A helical membrane pass occupies residues Glu-196–Ser-219. The Cytoplasmic portion of the chain corresponds to Gln-220 to Lys-236. A helical transmembrane segment spans residues Val-237 to Tyr-259. Topologically, residues Leu-260–Lys-272 are extracellular. The N-linked (GlcNAc...) asparagine glycan is linked to Asn-265. A helical membrane pass occupies residues Phe-273–Leu-292. Topologically, residues Arg-293 to Arg-312 are cytoplasmic.

Belongs to the G-protein coupled receptor 1 family.

It is found in the cell membrane. In terms of biological role, odorant receptor. This Homo sapiens (Human) protein is Olfactory receptor 2B8.